The sequence spans 121 residues: Large ribosomal subunit protein uL14c (121 aa).

It belongs to the universal ribosomal protein uL14 family. Part of the 50S ribosomal subunit.

It is found in the plastid. Its subcellular location is the chloroplast. In terms of biological role, binds to 23S rRNA. In Emiliania huxleyi (Coccolithophore), this protein is Large ribosomal subunit protein uL14c.